We begin with the raw amino-acid sequence, 97 residues long: Late transcription unit B protein (97 aa).

A disordered region spans residues S24–E45.

The chain is Late transcription unit B protein (ltuB) from Chlamydia trachomatis serovar D (strain ATCC VR-885 / DSM 19411 / UW-3/Cx).